A 750-amino-acid chain; its full sequence is Photosystem I P700 chlorophyll a apoprotein A1 (750 aa).

Helical transmembrane passes span 70–93, 156–179, 195–219, 291–309, 346–369, 385–411, 433–455, and 531–549; these read VFSAHFGQLSIIFLWLSGMYFHGA, LYCTAIGALVFAALMLFAGWFHYH, LNHHLAGLLGLGSLSWAGHQVHVSL, IAHHHLAIAILFLLAGHMY, WHAQLSLNLAMLGSLTIVVAHHMY, LSLFTHHMWIGGFLIVGAAAHAAIFMV, AIISHLNWVCIFLGFHSFGLYIH, and FLVHHIHAFTIHVTVLILL. The [4Fe-4S] cluster site is built by cysteine 573 and cysteine 582. 2 helical membrane-spanning segments follow: residues 589–610 and 664–686; these read HVFLGLFWMYNAISVVIFHFSW and LSAYGLFFLGAHFVWAFSLMFLF. Position 675 (histidine 675) interacts with chlorophyll a'. 2 residues coordinate chlorophyll a: methionine 683 and tyrosine 691. Phylloquinone is bound at residue tryptophan 692. The helical transmembrane segment at 724-744 threads the bilayer; it reads AVGVTHYLLGGIATTWAFFLA.

It belongs to the PsaA/PsaB family. The PsaA/B heterodimer binds the P700 chlorophyll special pair and subsequent electron acceptors. PSI consists of a core antenna complex that captures photons, and an electron transfer chain that converts photonic excitation into a charge separation. The eukaryotic PSI reaction center is composed of at least 11 subunits. P700 is a chlorophyll a/chlorophyll a' dimer, A0 is one or more chlorophyll a, A1 is one or both phylloquinones and FX is a shared 4Fe-4S iron-sulfur center. is required as a cofactor.

The protein resides in the plastid. It is found in the chloroplast thylakoid membrane. The enzyme catalyses reduced [plastocyanin] + hnu + oxidized [2Fe-2S]-[ferredoxin] = oxidized [plastocyanin] + reduced [2Fe-2S]-[ferredoxin]. Functionally, psaA and PsaB bind P700, the primary electron donor of photosystem I (PSI), as well as the electron acceptors A0, A1 and FX. PSI is a plastocyanin-ferredoxin oxidoreductase, converting photonic excitation into a charge separation, which transfers an electron from the donor P700 chlorophyll pair to the spectroscopically characterized acceptors A0, A1, FX, FA and FB in turn. Oxidized P700 is reduced on the lumenal side of the thylakoid membrane by plastocyanin. The polypeptide is Photosystem I P700 chlorophyll a apoprotein A1 (Arabis hirsuta (Hairy rock-cress)).